A 417-amino-acid polypeptide reads, in one-letter code: DNA primase DnaG (417 aa).

A Toprim domain is found at 171–257 (DAIIIVEGRA…SVEDMARKEI (87 aa)). The Mg(2+) site is built by E177, D219, and D221. The segment at 278-325 (VPGEKRTQDLRPQKPGASEQNSIKKENVENENESTPTSFEPISEPAPP) is disordered. Residues 279-289 (PGEKRTQDLRP) show a composition bias toward basic and acidic residues.

This sequence belongs to the archaeal DnaG primase family. In terms of assembly, forms a ternary complex with MCM helicase and DNA. The cofactor is Mg(2+).

It carries out the reaction ssDNA + n NTP = ssDNA/pppN(pN)n-1 hybrid + (n-1) diphosphate.. RNA polymerase that catalyzes the synthesis of short RNA molecules used as primers for DNA polymerase during DNA replication. This chain is DNA primase DnaG, found in Methanosphaerula palustris (strain ATCC BAA-1556 / DSM 19958 / E1-9c).